Reading from the N-terminus, the 427-residue chain is UDP-N-acetylglucosamine 1-carboxyvinyltransferase 1 (427 aa).

Position 23–24 (lysine 23–asparagine 24) interacts with phosphoenolpyruvate. UDP-N-acetyl-alpha-D-glucosamine is bound at residue arginine 96. Cysteine 120 acts as the Proton donor in catalysis. Residue cysteine 120 is modified to 2-(S-cysteinyl)pyruvic acid O-phosphothioketal. UDP-N-acetyl-alpha-D-glucosamine-binding positions include arginine 125–leucine 129, aspartate 309, and valine 331.

It belongs to the EPSP synthase family. MurA subfamily.

Its subcellular location is the cytoplasm. The enzyme catalyses phosphoenolpyruvate + UDP-N-acetyl-alpha-D-glucosamine = UDP-N-acetyl-3-O-(1-carboxyvinyl)-alpha-D-glucosamine + phosphate. Its pathway is cell wall biogenesis; peptidoglycan biosynthesis. In terms of biological role, cell wall formation. Adds enolpyruvyl to UDP-N-acetylglucosamine. The protein is UDP-N-acetylglucosamine 1-carboxyvinyltransferase 1 of Streptococcus pneumoniae serotype 4 (strain ATCC BAA-334 / TIGR4).